The primary structure comprises 379 residues: Probable peptidoglycan glycosyltransferase FtsW (379 aa).

Residues 1 to 15 (MHKTEAQTYLLYDRT) lie on the Cytoplasmic side of the membrane. The chain crosses the membrane as a helical span at residues 16–36 (LLLLTMGLVGIGLVMVISTSM). The Periplasmic portion of the chain corresponds to 37–52 (PIGVRLSEDPFYFARR). Residues 53–73 (YAFYLGLAVVLSLVTLGIPMA) form a helical membrane-spanning segment. Residues 74–79 (SWQRGS) are Cytoplasmic-facing. Residues 80-100 (SLILLITLIMLLLVLIAGQSV) form a helical membrane-spanning segment. At 101–113 (NGAVRWLALGPWR) the chain is on the periplasmic side. A helical membrane pass occupies residues 114–133 (IQPAELSKLALFCYLASYLV). The Cytoplasmic portion of the chain corresponds to 134–139 (RKAEEV). A helical transmembrane segment spans residues 140–162 (RTNFWGFCKPIGVMVLLAILLLA). Residues 163-165 (QPD) lie on the Periplasmic side of the membrane. The helical transmembrane segment at 166–183 (LGTVLVLFITTLAMLFLA) threads the bilayer. The Cytoplasmic portion of the chain corresponds to 184 to 186 (EAK). Residues 187–207 (IWQFLPIIGTGILAVMLLIIA) form a helical membrane-spanning segment. Residues 208–269 (KPYRRRRVTS…TEAHTDFICS (62 aa)) lie on the Periplasmic side of the membrane. Residues 270 to 290 (ILGEELGYFGVLLALLMVFLV) form a helical membrane-spanning segment. The Cytoplasmic portion of the chain corresponds to 291–301 (AFRAMSIGRKA). The chain crosses the membrane as a helical span at residues 302 to 322 (LAINQIFSGFLACSIGIWFSF). Over 323 to 342 (QTMVNVGAAAGMLPTKGLTL) the chain is Periplasmic. Residues 343 to 363 (PFISYGGSSMLIMLTAIVLLI) form a helical membrane-spanning segment. The Cytoplasmic segment spans residues 364-379 (RIDFETRLAKLQAFVR).

The protein belongs to the SEDS family. FtsW subfamily.

The protein resides in the cell inner membrane. It carries out the reaction [GlcNAc-(1-&gt;4)-Mur2Ac(oyl-L-Ala-gamma-D-Glu-L-Lys-D-Ala-D-Ala)](n)-di-trans,octa-cis-undecaprenyl diphosphate + beta-D-GlcNAc-(1-&gt;4)-Mur2Ac(oyl-L-Ala-gamma-D-Glu-L-Lys-D-Ala-D-Ala)-di-trans,octa-cis-undecaprenyl diphosphate = [GlcNAc-(1-&gt;4)-Mur2Ac(oyl-L-Ala-gamma-D-Glu-L-Lys-D-Ala-D-Ala)](n+1)-di-trans,octa-cis-undecaprenyl diphosphate + di-trans,octa-cis-undecaprenyl diphosphate + H(+). It functions in the pathway cell wall biogenesis; peptidoglycan biosynthesis. Functionally, peptidoglycan polymerase that is essential for cell division. The chain is Probable peptidoglycan glycosyltransferase FtsW from Moranella endobia (strain PCIT).